The sequence spans 196 residues: Rac-like GTP-binding protein RAC9 (196 aa).

13–20 is a binding site for GTP; sequence GDGAVGKT. Positions 35–43 match the Effector region motif; the sequence is YVPTVFDNF. GTP is bound by residues 60 to 64 and 118 to 121; these read DTAGQ and TKLD. A Cysteine methyl ester modification is found at Cys-193. The S-geranylgeranyl cysteine moiety is linked to residue Cys-193. The propeptide at 194–196 is removed in mature form; that stretch reads AFL.

The protein belongs to the small GTPase superfamily. Rho family.

It localises to the cytoplasm. The protein localises to the membrane. Its function is as follows. Inactive GDP-bound Rho GTPases reside in the cytosol, are found in a complex with Rho GDP-dissociation inhibitors (Rho GDIs), and are released from the GDI protein in order to translocate to membranes upon activation. In Gossypium hirsutum (Upland cotton), this protein is Rac-like GTP-binding protein RAC9 (RAC9).